The sequence spans 512 residues: Cytochrome P450 84A4 (512 aa).

Residues 7 to 24 (LIVLVPLLLFLFPHLLLR) traverse the membrane as a helical segment. Position 447 (cysteine 447) interacts with heme.

This sequence belongs to the cytochrome P450 family. It depends on heme as a cofactor. Expressed in seedlings, roots, stems and inflorescence nodes. Low or no expression in leaves, flowers, seeds and lignifying tissue.

Its subcellular location is the membrane. In terms of biological role, cytochrome P450 involved in the production of catechol-substituted substrates needed for the arabidopyrones biosynthesis. Converts p-coumaraldehyde into caffealdehyde. The chain is Cytochrome P450 84A4 (CYP84A4) from Arabidopsis thaliana (Mouse-ear cress).